Reading from the N-terminus, the 249-residue chain is MMKKMKWALVLALGLTGLNAFGQETPEVKIEKLKDNLYVYTTYNTFNGTKYAANAVYLVTSKGVVVIDSPWGEEKFKNFTDEIYKRHGKKVIMNIATHSHDDRAGGLEYFKSLGAKTYSTKMTDSILAKDNKPRAQYTFDNNKSFKVGKDEFQVYYPGKGHTADHVVVWFPKDKVLVGGCIIKSGDSKDLGFLGEAYVNDWTQSVHNIQKKFPNVQYVVAGHDDWKDQTAIQHTLDLISEYQQKQKASN.

Positions 1 to 22 (MMKKMKWALVLALGLTGLNAFG) are cleaved as a signal peptide. Zn(2+) contacts are provided by His98, His100, Asp102, His161, and Cys180. Lys183 provides a ligand contact to substrate. His222 lines the Zn(2+) pocket.

It belongs to the metallo-beta-lactamase superfamily. Class-B beta-lactamase family. As to quaternary structure, monomer. It depends on Zn(2+) as a cofactor.

The protein resides in the periplasm. It carries out the reaction a beta-lactam + H2O = a substituted beta-amino acid. Functionally, confers resistance to the different beta-lactams antibiotics (penicillin, cephalosporin and carbapenem) via the hydrolysis of the beta-lactam ring. This is Metallo-beta-lactamase type 2 (blaB4) from Elizabethkingia meningoseptica (Chryseobacterium meningosepticum).